A 315-amino-acid polypeptide reads, in one-letter code: Methionyl-tRNA formyltransferase (315 aa).

Residue 113–116 (SLLP) coordinates (6S)-5,6,7,8-tetrahydrofolate.

Belongs to the Fmt family.

The catalysed reaction is L-methionyl-tRNA(fMet) + (6R)-10-formyltetrahydrofolate = N-formyl-L-methionyl-tRNA(fMet) + (6S)-5,6,7,8-tetrahydrofolate + H(+). Its function is as follows. Attaches a formyl group to the free amino group of methionyl-tRNA(fMet). The formyl group appears to play a dual role in the initiator identity of N-formylmethionyl-tRNA by promoting its recognition by IF2 and preventing the misappropriation of this tRNA by the elongation apparatus. This is Methionyl-tRNA formyltransferase from Escherichia coli (strain SMS-3-5 / SECEC).